The sequence spans 430 residues: Putative aspergillopepsin A-like aspartic endopeptidase MCYG_07979 (430 aa).

A signal peptide spans 1–17 (MHLSSLLVAVLLPLALS). Residues 18 to 87 (KPTPRKKPGS…SKIAGGAPGA (70 aa)) constitute a propeptide, activation peptide. Positions 59–105 (STQGMDGYRPEPISRFQGNSKIAGGAPGAKDDGKDEKGEVENNPTSH) are disordered. Basic and acidic residues predominate over residues 87 to 98 (AKDDGKDEKGEV). Residues 109–427 (FLSPVTIGGQ…DYRGPSVSLA (319 aa)) form the Peptidase A1 domain. Residue Asp125 is part of the active site. Asn306 carries N-linked (GlcNAc...) asparagine glycosylation. Residue Asp314 is part of the active site. Asn352 carries an N-linked (GlcNAc...) asparagine glycan.

This sequence belongs to the peptidase A1 family.

The protein localises to the secreted. This is Putative aspergillopepsin A-like aspartic endopeptidase MCYG_07979 from Arthroderma otae (strain ATCC MYA-4605 / CBS 113480) (Microsporum canis).